Consider the following 284-residue polypeptide: RNase adapter protein RapZ (284 aa).

8-15 (GRSGSGKS) provides a ligand contact to ATP. GTP is bound at residue 56 to 59 (DVRN). The segment at 266-284 (RSRGKNVQSRHRTLEKRKQ) is RNA-binding.

Belongs to the RapZ-like family. RapZ subfamily. In terms of assembly, homotrimer.

Its function is as follows. Modulates the synthesis of GlmS, by affecting the processing and stability of the regulatory small RNA GlmZ. When glucosamine-6-phosphate (GlcN6P) concentrations are high in the cell, RapZ binds GlmZ and targets it to cleavage by RNase E. Consequently, GlmZ is inactivated and unable to activate GlmS synthesis. Under low GlcN6P concentrations, RapZ is sequestered and inactivated by an other regulatory small RNA, GlmY, preventing GlmZ degradation and leading to synthesis of GlmS. In Serratia proteamaculans (strain 568), this protein is RNase adapter protein RapZ.